The chain runs to 108 residues: Thiosulfate sulfurtransferase GlpE (108 aa).

One can recognise a Rhodanese domain in the interval 18–106 (ENEGATLADI…WERSGLPIET (89 aa)). The Cysteine persulfide intermediate role is filled by Cys-66.

This sequence belongs to the GlpE family.

Its subcellular location is the cytoplasm. It carries out the reaction thiosulfate + hydrogen cyanide = thiocyanate + sulfite + 2 H(+). The catalysed reaction is thiosulfate + [thioredoxin]-dithiol = [thioredoxin]-disulfide + hydrogen sulfide + sulfite + 2 H(+). Transferase that catalyzes the transfer of sulfur from thiosulfate to thiophilic acceptors such as cyanide or dithiols. May function in a CysM-independent thiosulfate assimilation pathway by catalyzing the conversion of thiosulfate to sulfite, which can then be used for L-cysteine biosynthesis. The protein is Thiosulfate sulfurtransferase GlpE of Actinobacillus pleuropneumoniae serotype 5b (strain L20).